The chain runs to 608 residues: Phosphogluconate dehydratase (608 aa).

Positions 154 and 221 each coordinate [4Fe-4S] cluster.

This sequence belongs to the IlvD/Edd family. [4Fe-4S] cluster is required as a cofactor.

The enzyme catalyses 6-phospho-D-gluconate = 2-dehydro-3-deoxy-6-phospho-D-gluconate + H2O. Its pathway is carbohydrate metabolism; Entner-Doudoroff pathway. Its function is as follows. Catalyzes the dehydration of 6-phospho-D-gluconate to 2-dehydro-3-deoxy-6-phospho-D-gluconate. The sequence is that of Phosphogluconate dehydratase from Pseudomonas aeruginosa (strain ATCC 15692 / DSM 22644 / CIP 104116 / JCM 14847 / LMG 12228 / 1C / PRS 101 / PAO1).